The chain runs to 804 residues: MPEILINKPVEDELVESYLLYSMSVIVGRAIPDVRDGLKPVQRRILYGMYELGLKHNSPTKKSARIVGEVMGKYHPHGDAPVYDALVRMAQPFTMRYPLIEGQGNFGSIDRDPPAAMRYTEARLTRLAEEMLEDIEKNTVNMIDNFDGTLKEPEVLPSKVPNLIINGASGIAVGMATNIPPHNLSETVDALIYLIDHPEATVEELMQFIKGPDFPTGAVVVNASELKKVYEEGRGRIIVRGKVHVEDGKRVKRIVITEIPYGVSKAGLIEQIAKIAKDDESLPIRNIRDESDKRGMRIVIEIPKDANEEVIINNLYKRTALQDYFNVQMLVIDKHKRPRLMNLKGLMEAFLEHRFEVIRRRARYEYEQYTRRAHVVEGLLKAARAIGVVVDIVRNSKDVESARQSLMETLEITEEQAKAILDMRLSRLTSLEIENLQNEYSDLVRKISEVKEILEKDEKVKEIMKKEFLYLKQQYGDPRRTEVTDQSIEYNEEELIVEEDVVITLSHKGYLKSTPLNSYRSQKRGGKGITVSKLSEDDEVEFVVVAKNTSSTLFITNLGRAYVLKNYQLETTGRNTRGRHITAFLNLEDTEKIVALASLNGEGRDLVIATKSGKIKRTALKEFENATSNRGVRAIKIEPGDEIVSARVVNSEKETLIVATKMGMAIRFPVSDVRRMGRNAAGVQAIKLQPGDEVVSVDVIPPGEEGEILTVTEKGFGKRTPVQLYRIQRRGGTGLRNISDVNKTGYVVAVRYVRGDEEIVVVTRNGMMIRFPVSEIGVIGRVTKGVKLIELGDDTISKVAVVKD.

Positions 31 to 495 constitute a Topo IIA-type catalytic domain; it reads IPDVRDGLKP…QSIEYNEEEL (465 aa). The active-site O-(5'-phospho-DNA)-tyrosine intermediate is Tyr-119. A GyrA-box motif is present at residues 522-528; the sequence is QKRGGKG.

Belongs to the type II topoisomerase GyrA/ParC subunit family. In terms of assembly, heterotetramer, composed of two GyrA and two GyrB chains. In the heterotetramer, GyrA contains the active site tyrosine that forms a transient covalent intermediate with DNA, while GyrB binds cofactors and catalyzes ATP hydrolysis.

It localises to the cytoplasm. The enzyme catalyses ATP-dependent breakage, passage and rejoining of double-stranded DNA.. A type II topoisomerase that negatively supercoils closed circular double-stranded (ds) DNA in an ATP-dependent manner to modulate DNA topology and maintain chromosomes in an underwound state. Negative supercoiling favors strand separation, and DNA replication, transcription, recombination and repair, all of which involve strand separation. Also able to catalyze the interconversion of other topological isomers of dsDNA rings, including catenanes and knotted rings. Type II topoisomerases break and join 2 DNA strands simultaneously in an ATP-dependent manner. This Thermotoga maritima (strain ATCC 43589 / DSM 3109 / JCM 10099 / NBRC 100826 / MSB8) protein is DNA gyrase subunit A.